Here is a 1297-residue protein sequence, read N- to C-terminus: Phosphoribosylformylglycinamidine synthase (1297 aa).

Residues 305–324 are disordered; the sequence is FPGAATGSGGEIRDEGATGR. 307–318 provides a ligand contact to ATP; it reads GAATGSGGEIRD. Aspartate 679, glutamate 718, asparagine 722, and aspartate 886 together coordinate Mg(2+). Residue serine 888 participates in ATP binding. The region spanning 1044-1297 is the Glutamine amidotransferase type-1 domain; that stretch reads IAVLREQGVN…LFRNARVFFK (254 aa). The Nucleophile role is filled by cysteine 1137. Active-site residues include histidine 1262 and glutamate 1264.

In the N-terminal section; belongs to the FGAMS family. Monomer.

Its subcellular location is the cytoplasm. It carries out the reaction N(2)-formyl-N(1)-(5-phospho-beta-D-ribosyl)glycinamide + L-glutamine + ATP + H2O = 2-formamido-N(1)-(5-O-phospho-beta-D-ribosyl)acetamidine + L-glutamate + ADP + phosphate + H(+). It participates in purine metabolism; IMP biosynthesis via de novo pathway; 5-amino-1-(5-phospho-D-ribosyl)imidazole from N(2)-formyl-N(1)-(5-phospho-D-ribosyl)glycinamide: step 1/2. Phosphoribosylformylglycinamidine synthase involved in the purines biosynthetic pathway. Catalyzes the ATP-dependent conversion of formylglycinamide ribonucleotide (FGAR) and glutamine to yield formylglycinamidine ribonucleotide (FGAM) and glutamate. The protein is Phosphoribosylformylglycinamidine synthase of Mannheimia succiniciproducens (strain KCTC 0769BP / MBEL55E).